The primary structure comprises 156 residues: Ribosomal RNA large subunit methyltransferase H (156 aa).

Residues Leu-73, Gly-104, and 123-128 (ISSMTL) each bind S-adenosyl-L-methionine.

Belongs to the RNA methyltransferase RlmH family. As to quaternary structure, homodimer.

It localises to the cytoplasm. It carries out the reaction pseudouridine(1915) in 23S rRNA + S-adenosyl-L-methionine = N(3)-methylpseudouridine(1915) in 23S rRNA + S-adenosyl-L-homocysteine + H(+). In terms of biological role, specifically methylates the pseudouridine at position 1915 (m3Psi1915) in 23S rRNA. The chain is Ribosomal RNA large subunit methyltransferase H from Burkholderia ambifaria (strain ATCC BAA-244 / DSM 16087 / CCUG 44356 / LMG 19182 / AMMD) (Burkholderia cepacia (strain AMMD)).